We begin with the raw amino-acid sequence, 180 residues long: Endoribonuclease YbeY (180 aa).

Residues histidine 149, histidine 153, and histidine 159 each coordinate Zn(2+).

This sequence belongs to the endoribonuclease YbeY family. Zn(2+) is required as a cofactor.

It is found in the cytoplasm. Its function is as follows. Single strand-specific metallo-endoribonuclease involved in late-stage 70S ribosome quality control and in maturation of the 3' terminus of the 16S rRNA. This is Endoribonuclease YbeY from Prochlorococcus marinus (strain MIT 9515).